A 243-amino-acid polypeptide reads, in one-letter code: 6-carboxyhexanoate--CoA ligase (243 aa).

Belongs to the BioW family. In terms of assembly, homodimer. It depends on Mg(2+) as a cofactor.

It catalyses the reaction heptanedioate + ATP + CoA = 6-carboxyhexanoyl-CoA + AMP + diphosphate. Its pathway is metabolic intermediate metabolism; pimeloyl-CoA biosynthesis; pimeloyl-CoA from pimelate: step 1/1. Catalyzes the transformation of pimelate into pimeloyl-CoA with concomitant hydrolysis of ATP to AMP. The polypeptide is 6-carboxyhexanoate--CoA ligase (Corynebacterium pseudotuberculosis (strain FRC41)).